Consider the following 229-residue polypeptide: Putative N-acetylmannosamine-6-phosphate 2-epimerase (229 aa).

The protein belongs to the NanE family.

The catalysed reaction is an N-acyl-D-glucosamine 6-phosphate = an N-acyl-D-mannosamine 6-phosphate. The protein operates within amino-sugar metabolism; N-acetylneuraminate degradation; D-fructose 6-phosphate from N-acetylneuraminate: step 3/5. Functionally, converts N-acetylmannosamine-6-phosphate (ManNAc-6-P) to N-acetylglucosamine-6-phosphate (GlcNAc-6-P). This chain is Putative N-acetylmannosamine-6-phosphate 2-epimerase, found in Escherichia coli O139:H28 (strain E24377A / ETEC).